Reading from the N-terminus, the 91-residue chain is Uteroglobin (91 aa).

The N-terminal stretch at 1-21 (MKLAITLALVTLALLCSPASA) is a signal peptide.

It belongs to the secretoglobin family. As to quaternary structure, antiparallel homodimer; disulfide-linked. Interaction with LMBR1L is controversial. As to expression, synthesized in the uterus and lung.

It localises to the secreted. Functionally, uteroglobin binds progesterone specifically and with high affinity. It may regulate progesterone concentrations reaching the blastocyst. It is also a potent inhibitor of phospholipase A2. The chain is Uteroglobin (SCGB1A1) from Oryctolagus cuniculus (Rabbit).